Here is a 208-residue protein sequence, read N- to C-terminus: Probable nicotinate-nucleotide adenylyltransferase (208 aa).

Belongs to the NadD family.

The catalysed reaction is nicotinate beta-D-ribonucleotide + ATP + H(+) = deamido-NAD(+) + diphosphate. The protein operates within cofactor biosynthesis; NAD(+) biosynthesis; deamido-NAD(+) from nicotinate D-ribonucleotide: step 1/1. In terms of biological role, catalyzes the reversible adenylation of nicotinate mononucleotide (NaMN) to nicotinic acid adenine dinucleotide (NaAD). The polypeptide is Probable nicotinate-nucleotide adenylyltransferase (Symbiobacterium thermophilum (strain DSM 24528 / JCM 14929 / IAM 14863 / T)).